The primary structure comprises 329 residues: VSG expression site-associated protein 221A (329 aa).

An N-terminal signal peptide occupies residues 1-23; sequence MKVEIVELVVLLFSVTCVDAWLQ. N-linked (GlcNAc...) asparagine glycosylation is found at Asn73, Asn294, and Asn308.

Its function is as follows. Not known but may be related to activation of the variant surface glycoprotein genes. In Trypanosoma brucei brucei, this protein is VSG expression site-associated protein 221A.